Consider the following 1243-residue polypeptide: ATP-dependent helicase/nuclease subunit A (1243 aa).

The UvrD-like helicase ATP-binding domain maps to 2 to 475; the sequence is VNWTKEQEEA…IDLARNFRSR (474 aa). ATP is bound at residue 23 to 30; it reads AAAGSGKT. The UvrD-like helicase C-terminal domain occupies 502–803; sequence AAELIYGNKM…RIMTIHKSKG (302 aa).

It belongs to the helicase family. AddA subfamily. In terms of assembly, heterodimer of AddA and AddB/RexB. Mg(2+) serves as cofactor.

It carries out the reaction Couples ATP hydrolysis with the unwinding of duplex DNA by translocating in the 3'-5' direction.. It catalyses the reaction ATP + H2O = ADP + phosphate + H(+). The heterodimer acts as both an ATP-dependent DNA helicase and an ATP-dependent, dual-direction single-stranded exonuclease. Recognizes the chi site generating a DNA molecule suitable for the initiation of homologous recombination. The AddA nuclease domain is required for chi fragment generation; this subunit has the helicase and 3' -&gt; 5' nuclease activities. The polypeptide is ATP-dependent helicase/nuclease subunit A (Oceanobacillus iheyensis (strain DSM 14371 / CIP 107618 / JCM 11309 / KCTC 3954 / HTE831)).